The following is a 413-amino-acid chain: MKPRVLGMILAGGQGSRLAPLTLKRSKPAVPFGGKYRIIDFAINNFINSGVFSIYVLTQYKAQSLTEHIQRGWRFGTFLQDYFITLVPAQMYRYEELGAVWYRGTADAVYQNLHLIDNFNADYVAIFSGDHIYKMNVEHMLQAHMDARADVTIAAYPMPRTRAHQFGVMQVDDRWRVTEFLEKPQDPPGLPGDPDTSLTSMGNYIFSRRALEELLHTSISGEGEGFDFGHNVLPRALADGYHVQAYDFHRNPIPGQSSPNLYWRDVGTLDAYFEASMDLVSVNPEFDIYNPQWPLRTSSEFSPPAKFVHEAEGRKGQAFNSLLAGGVIISGGTVRDSILSRNVRTHSYSLVESCVLFDNVEVGRHSHLRRVIVDKDVIIPPGTRIGLDHEEDRGRGFTVTNNGIVVVPKSYTF.

Residues Tyr-102, Gly-167, 182–183, and Ser-200 contribute to the alpha-D-glucose 1-phosphate site; that span reads EK.

It belongs to the bacterial/plant glucose-1-phosphate adenylyltransferase family. Homotetramer.

The enzyme catalyses alpha-D-glucose 1-phosphate + ATP + H(+) = ADP-alpha-D-glucose + diphosphate. It functions in the pathway glycan biosynthesis; glycogen biosynthesis. Functionally, involved in the biosynthesis of ADP-glucose, a building block required for the elongation reactions to produce glycogen. Catalyzes the reaction between ATP and alpha-D-glucose 1-phosphate (G1P) to produce pyrophosphate and ADP-Glc. In Deinococcus geothermalis (strain DSM 11300 / CIP 105573 / AG-3a), this protein is Glucose-1-phosphate adenylyltransferase.